A 371-amino-acid polypeptide reads, in one-letter code: tRNA-specific 2-thiouridylase MnmA (371 aa).

Residues alanine 24–serine 31 and leucine 50 each bind ATP. The active-site Nucleophile is cysteine 120. A disulfide bridge connects residues cysteine 120 and cysteine 216. Glycine 144 is a binding site for ATP. Residues lysine 166–glutamine 168 form an interaction with tRNA region. Cysteine 216 (cysteine persulfide intermediate) is an active-site residue.

It belongs to the MnmA/TRMU family.

It localises to the cytoplasm. It catalyses the reaction S-sulfanyl-L-cysteinyl-[protein] + uridine(34) in tRNA + AH2 + ATP = 2-thiouridine(34) in tRNA + L-cysteinyl-[protein] + A + AMP + diphosphate + H(+). Its function is as follows. Catalyzes the 2-thiolation of uridine at the wobble position (U34) of tRNA, leading to the formation of s(2)U34. This chain is tRNA-specific 2-thiouridylase MnmA, found in Wolbachia sp. subsp. Brugia malayi (strain TRS).